We begin with the raw amino-acid sequence, 877 residues long: GPI ethanolamine phosphate transferase 2 (877 aa).

2 N-linked (GlcNAc...) asparagine glycosylation sites follow: Asn-190 and Asn-368. The next 5 helical transmembrane spans lie at 409–429, 443–463, 464–484, 528–548, and 570–590; these read VDIY…FGLF, YNWY…ASSL, IEEE…ALYF, VDLL…LIYS, and DFGS…SFSF. N-linked (GlcNAc...) asparagine glycosylation occurs at Asn-611. The next 6 helical transmembrane spans lie at 634–654, 683–703, 716–736, 758–778, 817–837, and 854–876; these read IHLS…RIVL, EIVP…KLLA, LMII…FSMG, VFLV…FWSL, LAGF…CFNL, and FASW…ILAL.

It belongs to the PIGG/PIGN/PIGO family. PIGG subfamily.

It localises to the endoplasmic reticulum membrane. Its pathway is glycolipid biosynthesis; glycosylphosphatidylinositol-anchor biosynthesis. Its function is as follows. Ethanolamine phosphate transferase involved in glycosylphosphatidylinositol-anchor biosynthesis. Transfers ethanolamine phosphate to the GPI second mannose. The sequence is that of GPI ethanolamine phosphate transferase 2 (LAS21) from Debaryomyces hansenii (strain ATCC 36239 / CBS 767 / BCRC 21394 / JCM 1990 / NBRC 0083 / IGC 2968) (Yeast).